Here is a 251-residue protein sequence, read N- to C-terminus: Uroporphyrinogen-III C-methyltransferase (251 aa).

S-adenosyl-L-homocysteine contacts are provided by residues P17, 93–95 (GGD), 123–124 (TS), M177, and A206.

This sequence belongs to the precorrin methyltransferase family.

It is found in the plastid. Its subcellular location is the chloroplast. The catalysed reaction is uroporphyrinogen III + 2 S-adenosyl-L-methionine = precorrin-2 + 2 S-adenosyl-L-homocysteine + H(+). The protein operates within cofactor biosynthesis; adenosylcobalamin biosynthesis; precorrin-2 from uroporphyrinogen III: step 1/1. Its pathway is porphyrin-containing compound metabolism; siroheme biosynthesis; precorrin-2 from uroporphyrinogen III: step 1/1. Catalyzes the two successive C-2 and C-7 methylation reactions involved in the conversion of uroporphyrinogen III to precorrin-2 via the intermediate formation of precorrin-1. It is a step in the biosynthesis of both cobalamin (vitamin B12) and siroheme. The sequence is that of Uroporphyrinogen-III C-methyltransferase (cobA) from Cyanidium caldarium (Red alga).